The sequence spans 424 residues: Inhibin beta A chain (424 aa).

The signal sequence occupies residues 1–20; the sequence is MPLLWLRGFLLASCWIIVRS. Positions 21–308 are excised as a propeptide; the sequence is SPTPGSEGHG…EDHPHRRRRR (288 aa). Residue N165 is glycosylated (N-linked (GlcNAc...) asparagine). Residues 264 to 275 are compositionally biased toward basic and acidic residues; that stretch reads EVDGDGKKKDGS. The interval 264–306 is disordered; that stretch reads EVDGDGKKKDGSDGGLEEEKEQSHRPFLMLQARQSEDHPHRRR. 4 cysteine pairs are disulfide-bonded: C312/C320, C319/C389, C348/C421, and C352/C423.

Belongs to the TGF-beta family. In terms of assembly, dimeric, linked by one or more disulfide bonds. Inhibin A is a dimer of alpha/INHA and beta-A/INHBA. Activin A is a homodimer of beta-A/INHBA. Activin AB is a dimer of beta-A/INHBA and beta-B/INHBB. Interacts with FST and FSTL3; these interactions prevent activin A interaction to its type II receptor. Activin A interacts with ACVR2A. Activin A interacts with BMPR2. Inhibin A interacts with ACVR1; this interaction creates a non-signaling complex (NSC) that inhibits ACVR1-mediated BMP signaling. Inhibin A interacts with ACVR2A.

It is found in the secreted. Its function is as follows. Inhibins/activins are involved in regulating a number of diverse functions such as hypothalamic and pituitary hormone secretion, gonadal hormone secretion, germ cell development and maturation, erythroid differentiation, insulin secretion, nerve cell survival, embryonic axial development or bone growth, depending on their subunit composition. Activin A is a homodimer of INHBA that plays a role in several essential biological processes including embryonic development, stem cell maintenance and differentiation, haematopoiesis, cell proliferation and tissue fibrosis. Signals through type I (such as ACVR1B or ACVR1C) and type II receptors (such as ACVR2A, ACVR2B or BMPR2) which, upon ligand binding, phosphorylate SMAD2 and SMAD3 intracellular signaling mediators that form a complex with SMAD4, translocate to the nucleus and modulate gene expression. Can also activate alternative non-canonical intracellular signaling pathways including the p38 MAPK, extracellular signal-regulated kinases 1/2 (ERK1/2) and c-Jun N-terminal kinases (JNKs) to modulate cell migration and differentiation. Alternatively, promotes osteoblastic differentiation via ACVRL1-SMAD1/5/9 pathway. In addition, can engage the type I receptor ACVR1 to form an ACVR1-activin A-type II receptor non-signaling complex (NSC) that renders receptors unavailable for engagement with BMPs, hence resulting in an apparent inhibition of ACVR1-mediated BMP signaling. In terms of biological role, inhibin A is a dimer of alpha/INHA and beta-A/INHBA that functions as a feedback regulator in the hypothalamic-pituitary-gonadal (HPG) axis. Inhibits the secretion of FSH from the anterior pituitary gland by acting on pituitary gonadotrope cells. Antagonizes activin A by binding to the proteoglycan, betaglycan, and forming a stable complex with and, thereby, sequestering type II activin receptors while excluding type I receptor. The chain is Inhibin beta A chain (Inhba) from Rattus norvegicus (Rat).